The chain runs to 271 residues: Effector CFEM6 (271 aa).

A signal peptide spans 1–17 (MKYSMITLGAFAMMAVA). Residues 18-111 (QLSSLPACGQ…LGPATAVVAS (94 aa)) enclose the CFEM domain. 4 disulfides stabilise this stretch: Cys25–Cys68, Cys29–Cys63, Cys42–Cys49, and Cys51–Cys84. Residue Asp46 coordinates heme. A lipid anchor (GPI-anchor amidated serine) is attached at Ser247. Residues 248–271 (SAGGARQTAFAGLAAAAGFAAIIL) constitute a propeptide, removed in mature form.

It belongs to the RBT5 family.

It localises to the cell membrane. It is found in the secreted. Its subcellular location is the host nucleus. The protein localises to the host cell membrane. The protein resides in the host chloroplast envelope. Its function is as follows. Appears to function during host infection, and may play a role in suppressing the host immune response. In Marssonina brunnea f. sp. multigermtubi (strain MB_m1) (Marssonina leaf spot fungus), this protein is Effector CFEM6.